The following is a 206-amino-acid chain: Histidine biosynthesis bifunctional protein HisIE (206 aa).

Positions 1-117 (MGSETTAAGD…SCFPTAPSQF (117 aa)) are phosphoribosyl-AMP cyclohydrolase. The segment at 118 to 206 (LGSLDALIAE…AVALLESRHK (89 aa)) is phosphoribosyl-ATP pyrophosphohydrolase.

It in the N-terminal section; belongs to the PRA-CH family. This sequence in the C-terminal section; belongs to the PRA-PH family.

It is found in the cytoplasm. It catalyses the reaction 1-(5-phospho-beta-D-ribosyl)-ATP + H2O = 1-(5-phospho-beta-D-ribosyl)-5'-AMP + diphosphate + H(+). It carries out the reaction 1-(5-phospho-beta-D-ribosyl)-5'-AMP + H2O = 1-(5-phospho-beta-D-ribosyl)-5-[(5-phospho-beta-D-ribosylamino)methylideneamino]imidazole-4-carboxamide. It functions in the pathway amino-acid biosynthesis; L-histidine biosynthesis; L-histidine from 5-phospho-alpha-D-ribose 1-diphosphate: step 2/9. The protein operates within amino-acid biosynthesis; L-histidine biosynthesis; L-histidine from 5-phospho-alpha-D-ribose 1-diphosphate: step 3/9. The chain is Histidine biosynthesis bifunctional protein HisIE from Xanthomonas campestris pv. campestris (strain ATCC 33913 / DSM 3586 / NCPPB 528 / LMG 568 / P 25).